A 585-amino-acid chain; its full sequence is Protein-lysine N-methyltransferase EFM1 (585 aa).

One can recognise an SET domain in the interval 23–281 (PKISFRITED…AQDELFNNYG (259 aa)). Position 280 (tyrosine 280) interacts with S-adenosyl-L-methionine.

It belongs to the class V-like SAM-binding methyltransferase superfamily. RKM1 family.

It localises to the cytoplasm. Its function is as follows. S-adenosyl-L-methionine-dependent protein-lysine N-methyltransferase that monomethylates elongation factor 1-alpha (TEF1/TEF2) at 'Lys-30'. The chain is Protein-lysine N-methyltransferase EFM1 from Saccharomyces cerevisiae (strain ATCC 204508 / S288c) (Baker's yeast).